The sequence spans 309 residues: 5-formyl-3-hydroxy-2-methylpyridine 4-carboxylate 5-dehydrogenase (309 aa).

Residues 12 to 13, aspartate 32, 87 to 89, and lysine 94 each bind NAD(+); these read TM and VPE.

Belongs to the 3-hydroxyacyl-CoA dehydrogenase family. As to quaternary structure, homodimer.

The catalysed reaction is 5-formyl-3-hydroxy-2-methylpyridine-4-carboxylate + NAD(+) + H2O = 5-hydroxy-6-methylpyridine-3,4-dicarboxylate + NADH + 2 H(+). It catalyses the reaction 5-formyl-3-hydroxy-2-methylpyridine-4-carboxylate + NADH + H(+) = 4-pyridoxate + NAD(+). It functions in the pathway cofactor degradation; B6 vitamer degradation. Involved in the degradation of pyridoxine (vitamin B(6)). Catalyzes the oxidation of 5-formyl-3-hydroxy-2-methylpyridine-4-carboxylate (FHMPC) by NAD(+) to 5-hydroxy-6-methylpyridine-3,4-dicarboxylate (HMPDC). Can also catalyze the reduction of FHMPC by NADH to 4-pyridoxic acid. This chain is 5-formyl-3-hydroxy-2-methylpyridine 4-carboxylate 5-dehydrogenase, found in Mesorhizobium japonicum (strain LMG 29417 / CECT 9101 / MAFF 303099) (Mesorhizobium loti (strain MAFF 303099)).